Here is a 695-residue protein sequence, read N- to C-terminus: Amphiphysin (695 aa).

Coiled-coil stretches lie at residues 10-83 (AKNV…SLHE) and 144-191 (DYDS…QEEL). The region spanning 24-240 (VLQKLGKADE…MTKLGDQHAD (217 aa)) is the BAR domain. Disordered regions lie at residues 244–312 (TIQG…VTPT) and 486–617 (GAPG…EASQ). At serine 252 the chain carries Phosphoserine. Threonine 260 carries the phosphothreonine modification. The span at 261–274 (PSPPEEPSPLPSPT) shows a compositional bias: pro residues. Residues serine 262, serine 268, serine 272, and serine 276 each carry the phosphoserine modification. Threonine 280 is subject to Phosphothreonine. A phosphoserine mark is found at serine 506 and serine 638. Positions 622–695 (GFLYKVETLH…FPENFTRRLD (74 aa)) constitute an SH3 domain.

As to quaternary structure, heterodimer with BIN1. Binds SH3GLB1. Interacts with REPS1 and SGIP1. Binds AP2A2. Interacts with AP2B1. Interacts with DNM1 and SYNJ1. Neurons, certain endocrine cell types and spermatocytes.

It localises to the cytoplasmic vesicle. Its subcellular location is the secretory vesicle. The protein localises to the synaptic vesicle membrane. It is found in the cytoplasm. The protein resides in the cytoskeleton. Functionally, may participate in mechanisms of regulated exocytosis in synapses and certain endocrine cell types. May control the properties of the membrane associated cytoskeleton. The sequence is that of Amphiphysin (AMPH) from Homo sapiens (Human).